Reading from the N-terminus, the 346-residue chain is Very-long-chain 3-oxoacyl-CoA reductase (346 aa).

Residues 26-46 (GASALLAAGSLFVVSRALVFV) form a helical membrane-spanning segment. NADP(+) is bound by residues Val-71, Asp-126, Asp-134, Asn-153, Tyr-220, Lys-224, Ile-253, and Ser-255. Tyr-220 acts as the Proton donor in catalysis. Lys-224 functions as the Lowers pKa of active site Tyr in the catalytic mechanism.

The protein belongs to the short-chain dehydrogenases/reductases (SDR) family.

The protein localises to the endoplasmic reticulum membrane. It carries out the reaction a very-long-chain (3R)-3-hydroxyacyl-CoA + NADP(+) = a very-long-chain 3-oxoacyl-CoA + NADPH + H(+). The protein operates within lipid metabolism; fatty acid biosynthesis. Its function is as follows. Component of the microsomal membrane bound fatty acid elongation system, which produces the 26-carbon very long-chain fatty acids (VLCFA) from palmitate. Catalyzes the reduction of the 3-ketoacyl-CoA intermediate that is formed in each cycle of fatty acid elongation. VLCFAs serve as precursors for ceramide and sphingolipids. The protein is Very-long-chain 3-oxoacyl-CoA reductase of Aspergillus niger (strain ATCC MYA-4892 / CBS 513.88 / FGSC A1513).